Consider the following 910-residue polypeptide: E3 ubiquitin-protein ligase HUL5 (910 aa).

The residue at position 1 (Met1) is an N-acetylmethionine. The tract at residues 1–25 is disordered; it reads MLNFTGQTRRRNVNLGNRTRNSKKD. The HECT domain occupies 810-910; it reads YGGYKEEDQT…INSGARFDLS (101 aa). The Glycyl thioester intermediate role is filled by Cys878.

It belongs to the UBE3C family. In terms of assembly, interacts with 19S proteasomes.

It localises to the cytoplasm. Its subcellular location is the cytosol. It is found in the nucleus. It catalyses the reaction S-ubiquitinyl-[E2 ubiquitin-conjugating enzyme]-L-cysteine + [acceptor protein]-L-lysine = [E2 ubiquitin-conjugating enzyme]-L-cysteine + N(6)-ubiquitinyl-[acceptor protein]-L-lysine.. The protein operates within protein modification; protein ubiquitination. Functionally, non-essential E3 ubiquitin-protein ligase that specifically catalyzes 'Lys-29'- and 'Lys-48'-linked polyubiquitin chains. Accepts ubiquitin from an E2 ubiquitin-conjugating enzyme in the form of a thioester and then directly transfers the ubiquitin to targeted substrates. Associates with the proteasome and promotes elongation of ubiquitin chains on substrates bound to the proteasome. Elongation of ubiquitin chains on substrates bound to the proteasome promotes proteasomal processivity. Also promotes ubiquitin elongation of 26S proteasome subunit RPN10. Involved in the stress response required to maintain cell fitness following heat-shock: acts by mediating ubiquitination of cytosolic misfolded proteins, leading to their subsequent degradation. The polypeptide is E3 ubiquitin-protein ligase HUL5 (Saccharomyces cerevisiae (strain ATCC 204508 / S288c) (Baker's yeast)).